Here is a 166-residue protein sequence, read N- to C-terminus: Endoribonuclease YbeY (166 aa).

The Zn(2+) site is built by His-136, His-140, and His-146.

It belongs to the endoribonuclease YbeY family. Zn(2+) serves as cofactor.

Its subcellular location is the cytoplasm. In terms of biological role, single strand-specific metallo-endoribonuclease involved in late-stage 70S ribosome quality control and in maturation of the 3' terminus of the 16S rRNA. This Synechococcus sp. (strain CC9605) protein is Endoribonuclease YbeY.